Reading from the N-terminus, the 572-residue chain is Arginine--tRNA ligase (572 aa).

A 'HIGH' region motif is present at residues 122–132 (PNLAKEMHVGH).

Belongs to the class-I aminoacyl-tRNA synthetase family. Monomer.

It localises to the cytoplasm. The catalysed reaction is tRNA(Arg) + L-arginine + ATP = L-arginyl-tRNA(Arg) + AMP + diphosphate. The chain is Arginine--tRNA ligase from Neisseria meningitidis serogroup C / serotype 2a (strain ATCC 700532 / DSM 15464 / FAM18).